Reading from the N-terminus, the 192-residue chain is MSSSSETCFVHPNAIVETKKIGNNTRIWAFVHILPQAMIGDNCNICDHCFIENDVFIGNNVTVKSGIYIWDGVYIEDNVFLGPNVVFTNDVFPRSKVYPESFGRTIVKKGASIGANSVIVAGNIIGEYAMVGAGSVVTRDIPDYALAYGNPARIKGYVCQCTSKLKFIDNQAVCQCGKRYKYADGIVSQLII.

It belongs to the transferase hexapeptide repeat family.

The catalysed reaction is dTDP-3-amino-3,6-dideoxy-alpha-D-galactopyranose + acetyl-CoA = dTDP-3-acetamido-3,6-dideoxy-alpha-D-galactopyranose + CoA + H(+). In terms of biological role, catalyzes the transfer of an acetyl group to dTDP-D-Fucp3N to form dTDP-D-Fucp3NAc in the biosynthesis of dTDP-3-acetamido-3,6-dideoxy-alpha-D-galactose, a glycan chain of the S-layer. This is dTDP-3-amino-3,6-dideoxy-alpha-D-galactopyranose 3-N-acetyltransferase (fdtC) from Aneurinibacillus thermoaerophilus.